Here is a 254-residue protein sequence, read N- to C-terminus: Guanylate kinase (254 aa).

The 180-residue stretch at 64 to 243 (KHLVVLAGPT…AAREVVDLMM (180 aa)) folds into the Guanylate kinase-like domain. An ATP-binding site is contributed by 71–78 (GPTAVGKG).

The protein belongs to the guanylate kinase family.

It localises to the cytoplasm. It catalyses the reaction GMP + ATP = GDP + ADP. In terms of biological role, essential for recycling GMP and indirectly, cGMP. The polypeptide is Guanylate kinase (Leifsonia xyli subsp. xyli (strain CTCB07)).